The primary structure comprises 1274 residues: MNPTELHMMWMSSQYNAANNMTLEDATALLNHPTVGLLEEMSGHHHQPTLEMNPMMGLVGGDFNGHAATLSGTLPPGTLIATNSNNLYSFAHLGGLQHQLLQQSAAVAAFQNYTEVMDADGMTVGLATDPHGELMDETCDDEDQVYGHQIDDGYDDGGAGLEPKQEIINIDDFVMMNEDNNSYDGTDFMTSSDKDISQSSSSGLTHMQGGGVSLGVAGAEHDLLVPLGDGLMHHKLLGATLAPAMPLNVGNSNVFGNIMVTGADPPSSKQMKGYRNSNSSGTSSATVTTVASTAVMRAQRKTRKIEPVNRPGLVLKTPIAYKGNIDPSVIPIQKDGMAVCERCGAIGVKHTFYTKSRRFCSMACARGELYSLVLNNKMETTGATTSNNQSTSSSPLPAASGTSLDVTEDALLASDQPQSDIELDLHAAHIKNANYRFRITDQSKITQLNSFGEPMSLGGDAAAHNVQMAADETIAALNGAAVGDAAAPGGEANGSGNDTSTPNTASSGYLSAAPTPKALRLFKDVYPQDDLPQIPKYERLPAPCPQMEKVLSIRRRMYDPTHSYDWLPRLNKENFNAAPVTCFPHAPGCEVWDNLGVGMKVEVENTDCDNIEIIQPGQTPTSFWVATILEIKGYKALMSYEGFDTDSHDFWVNLCNAEVHSVGWCATRGKPLIPPRTIEHKYKDWKDFLVGRLSGARTLPSNFYNKINDSLQSRFRLGLNLECVDKDRISQVRLATVTKIVGKRLFLRYFDTDDGFWCHEDSPIIHPVGWATTVGHNLAAPQDYLERMLAGREAMIEVHEDDATIELFKMNFTFDEYFLDGKTNGFIEGMKLEAVDPLNLSSICPATVMAVLKFGYMMIRIDSYQPDESGSDWFCYHEKSPCIFPAGFCSANNISVTPPNGYDSRTFTWEVYLRNTGAVAANQHLFHRVVPEHGFETGMSLECADLMDPRLVCVATVARVVGRLLKVHFDGWTDEYDQWLDCESADIYPVGWCILVGHKLEGPPRVSYQQVAKPAPKPKVPRKKKTKKGASTTGGGAAKQQNDNTQTTQTVKPRTIALKTTPHLPKLSIKLELKPEHHNAAFYENNQPEDGDGDEEDPDPDADADLDADADGDGDGSTSHISEQSTTHSSSDQILGSGSGGGSTSAPVVTAATGSIGGNSNKMNSSATSSKYIPRLADIDASEAAHLELQPDSWNVYDVSQFLRVNDCTAYCDTFSRSKIDGKRLLQLTKDDIMPLLGMKVGPALIISDLITQLKCKVNPGRARSHKTNKSSYL.

The segment at 266-285 is disordered; it reads PSSKQMKGYRNSNSSGTSSA. Positions 267–278 are enriched in polar residues; that stretch reads SSKQMKGYRNSN. An FCS-type zinc finger spans residues 331-366; sequence PIQKDGMAVCERCGAIGVKHTFYTKSRRFCSMACAR. Residues Cys340, Cys343, Cys360, and Cys364 each coordinate Zn(2+). Low complexity predominate over residues 381 to 394; it reads TGATTSNNQSTSSS. Disordered stretches follow at residues 381–401 and 488–510; these read TGATTSNNQSTSSSPLPAASG and PGGEANGSGNDTSTPNTASSGYL. The segment covering 494 to 509 has biased composition (polar residues); that stretch reads GSGNDTSTPNTASSGY. MBT repeat units follow at residues 564 to 675, 683 to 781, 789 to 899, and 907 to 1003; these read YDWL…LIPP, KDWK…LAAP, LAGR…VTPP, and FTWE…LEGP. Disordered regions lie at residues 1007-1063 and 1083-1167; these read SYQQ…TTPH and YENN…NSSA. The segment covering 1019 to 1028 has biased composition (basic residues); that stretch reads KVPRKKKTKK. Residues 1038-1050 are compositionally biased toward low complexity; the sequence is AKQQNDNTQTTQT. Positions 1087–1114 are enriched in acidic residues; it reads QPEDGDGDEEDPDPDADADLDADADGDG. 2 stretches are compositionally biased toward polar residues: residues 1117 to 1128 and 1158 to 1167; these read STSHISEQSTTH and GNSNKMNSSA. One can recognise an SAM domain in the interval 1194–1258; sequence WNVYDVSQFL…DLITQLKCKV (65 aa).

Interacts with pho as a component of the pho-repressive complex (PhoRC).

The protein localises to the nucleus. Its function is as follows. Polycomb group (PcG) protein that binds to the Polycomb response elements (PREs) found in the regulatory regions of many genes. PcG proteins act by forming multiprotein complexes, which are required to maintain the transcriptionally repressive state of homeotic genes throughout development. PcG proteins are not required to initiate repression, but to maintain it during later stages of development. They probably act via the methylation of histones, rendering chromatin heritably changed in its expressibility. Necessary but not sufficient to recruit a functional PcG repressive complex that represses target genes, suggesting that the recruitment of the distinct PRC1 complex is also required to allow a subsequent repression. The protein is Polycomb protein Sfmbt of Drosophila pseudoobscura pseudoobscura (Fruit fly).